Consider the following 329-residue polypeptide: uncharacterized protein (329 aa).

2 coiled-coil regions span residues Lys57–Thr120 and Gln225–Met251.

This is an uncharacterized protein from Homo sapiens (Human).